The following is a 162-amino-acid chain: Transcription elongation factor GreB (162 aa).

Residues 52–73 (KKLLREIDRRVRYLRKRLEDVK) adopt a coiled-coil conformation.

This sequence belongs to the GreA/GreB family. GreB subfamily.

In terms of biological role, necessary for efficient RNA polymerase transcription elongation past template-encoded arresting sites. The arresting sites in DNA have the property of trapping a certain fraction of elongating RNA polymerases that pass through, resulting in locked ternary complexes. Cleavage of the nascent transcript by cleavage factors such as GreA or GreB allows the resumption of elongation from the new 3'terminus. GreB releases sequences of up to 9 nucleotides in length. This chain is Transcription elongation factor GreB, found in Pseudomonas putida (strain ATCC 47054 / DSM 6125 / CFBP 8728 / NCIMB 11950 / KT2440).